The sequence spans 1023 residues: 1-phosphatidylinositol 4,5-bisphosphate phosphodiesterase beta-4 (1023 aa).

In terms of domain architecture, PI-PLC X-box spans 149-299; sequence QEMDHPLAHY…LKRKILIKKQ (151 aa). Catalysis depends on residues H164 and H211. The PI-PLC Y-box domain occupies 413 to 529; it reads LSTMINYAQP…GYLLKPDFMR (117 aa). The 126-residue stretch at 532-657 folds into the C2 domain; the sequence is DRTFDPFSET…SLRNEGNKPL (126 aa). 2 disordered regions span residues 711 to 742 and 930 to 958; these read ADVP…SELR and KISM…VREL. Composition is skewed to polar residues over residues 729–742 and 933–942; these read AKAN…SELR and MENSKAISQD. Residue T734 is modified to Phosphothreonine. Basic and acidic residues predominate over residues 943–957; sequence KSIKNKAERERRVRE.

Requires Ca(2+) as cofactor. In terms of processing, the N-terminus is blocked. In terms of tissue distribution, preferentially expressed in the retina.

It localises to the cell membrane. It carries out the reaction a 1,2-diacyl-sn-glycero-3-phospho-(1D-myo-inositol-4,5-bisphosphate) + H2O = 1D-myo-inositol 1,4,5-trisphosphate + a 1,2-diacyl-sn-glycerol + H(+). The catalysed reaction is a 1,2-diacyl-sn-glycero-3-phospho-(1D-myo-inositol) + H2O = 1D-myo-inositol 1-phosphate + a 1,2-diacyl-sn-glycerol + H(+). Activated phosphatidylinositol-specific phospholipase C enzymes catalyze the production of the second messenger molecules diacylglycerol (DAG) and inositol 1,4,5-trisphosphate (IP3) involved in G-protein coupled receptor signaling pathways. PLCB4 is a direct effector of the endothelin receptor signaling pathway that plays an essential role in lower jaw and middle ear structures development. This is 1-phosphatidylinositol 4,5-bisphosphate phosphodiesterase beta-4 (PLCB4) from Bos taurus (Bovine).